We begin with the raw amino-acid sequence, 112 residues long: Photosystem II reaction center Psb28 protein (112 aa).

The protein belongs to the Psb28 family. In terms of assembly, part of the photosystem II complex.

The protein resides in the plastid. It is found in the cyanelle thylakoid membrane. The chain is Photosystem II reaction center Psb28 protein from Cyanophora paradoxa.